We begin with the raw amino-acid sequence, 138 residues long: Large ribosomal subunit protein bL17 (138 aa).

Belongs to the bacterial ribosomal protein bL17 family. As to quaternary structure, part of the 50S ribosomal subunit. Contacts protein L32.

This chain is Large ribosomal subunit protein bL17, found in Nitrobacter winogradskyi (strain ATCC 25391 / DSM 10237 / CIP 104748 / NCIMB 11846 / Nb-255).